A 76-amino-acid polypeptide reads, in one-letter code: DNA-directed RNA polymerase subunit epsilon (76 aa).

It belongs to the RNA polymerase subunit epsilon family. RNAP is composed of a core of 2 alpha, a beta and a beta' subunit. The core is associated with a delta subunit, and at least one of epsilon or omega. When a sigma factor is associated with the core the holoenzyme is formed, which can initiate transcription.

It catalyses the reaction RNA(n) + a ribonucleoside 5'-triphosphate = RNA(n+1) + diphosphate. In terms of biological role, a non-essential component of RNA polymerase (RNAP). This Streptococcus thermophilus (strain CNRZ 1066) protein is DNA-directed RNA polymerase subunit epsilon.